The primary structure comprises 319 residues: uncharacterized protein (319 aa).

A disordered region spans residues K281–D319. Polar residues predominate over residues L299–C308.

It localises to the cytoplasm. The protein localises to the nucleus. This is an uncharacterized protein from Saccharomyces cerevisiae (strain ATCC 204508 / S288c) (Baker's yeast).